Consider the following 440-residue polypeptide: uncharacterized protein (440 aa).

The signal sequence occupies residues 1–29; sequence MLRLQMMEGLIVKRTLLLILLLVISVSYA.

The protein belongs to the Mj S-layer protein family.

This is an uncharacterized protein from Methanocaldococcus jannaschii (strain ATCC 43067 / DSM 2661 / JAL-1 / JCM 10045 / NBRC 100440) (Methanococcus jannaschii).